We begin with the raw amino-acid sequence, 593 residues long: V-type ATP synthase alpha chain (593 aa).

246–253 is a binding site for ATP; that stretch reads GPFGAGKT.

It belongs to the ATPase alpha/beta chains family.

The enzyme catalyses ATP + H2O + 4 H(+)(in) = ADP + phosphate + 5 H(+)(out). Functionally, produces ATP from ADP in the presence of a proton gradient across the membrane. The V-type alpha chain is a catalytic subunit. The polypeptide is V-type ATP synthase alpha chain (Protochlamydia amoebophila (strain UWE25)).